The chain runs to 308 residues: N-acetyl-gamma-glutamyl-phosphate reductase (308 aa).

The active site involves Cys-116.

Belongs to the NAGSA dehydrogenase family. Type 2 subfamily.

The protein localises to the cytoplasm. The catalysed reaction is N-acetyl-L-glutamate 5-semialdehyde + phosphate + NADP(+) = N-acetyl-L-glutamyl 5-phosphate + NADPH + H(+). It functions in the pathway amino-acid biosynthesis; L-arginine biosynthesis; N(2)-acetyl-L-ornithine from L-glutamate: step 3/4. Catalyzes the NADPH-dependent reduction of N-acetyl-5-glutamyl phosphate to yield N-acetyl-L-glutamate 5-semialdehyde. In Mesorhizobium japonicum (strain LMG 29417 / CECT 9101 / MAFF 303099) (Mesorhizobium loti (strain MAFF 303099)), this protein is N-acetyl-gamma-glutamyl-phosphate reductase.